Here is a 424-residue protein sequence, read N- to C-terminus: Chitinase CLP (424 aa).

The first 18 residues, 1-18 (MSLHLLLAVSLCVALASS), serve as a signal peptide directing secretion. The Peptidase A1 domain maps to 43–405 (AATSLYTVPI…DEEKQRLGFS (363 aa)). Asparagine 139, asparagine 345, and asparagine 419 each carry an N-linked (GlcNAc...) asparagine glycan.

The protein belongs to the peptidase A1 family. As to expression, expressed in roots. Expressed at low levels in leaf sheaths, stems and flowers.

The protein localises to the secreted. The protein resides in the extracellular space. It is found in the apoplast. It catalyses the reaction Random endo-hydrolysis of N-acetyl-beta-D-glucosaminide (1-&gt;4)-beta-linkages in chitin and chitodextrins.. Functionally, chitinase that possesses antifungal activity. Inhibits the growth of the fungal pathogen Rhizoctonia solani by degrading the fungal cell wall. Does not possess inhibiting activity against fungal endo-1,4-beta-D-xylanases belonging to glycoside hydrolase family 10 (GH10) and family 11 (GH11). Involved in the regulation of plant growth by regulating the intracellular calcium ion concentration in roots. This is Chitinase CLP from Oryza sativa subsp. japonica (Rice).